A 279-amino-acid polypeptide reads, in one-letter code: Beta-porphyranase E (279 aa).

Positions methionine 1 to glycine 18 are cleaved as a signal peptide. The GH16 domain maps to glutamine 19–valine 277. Residues tryptophan 56, arginine 60, glutamate 141, glutamate 146, and glutamate 243 each contribute to the substrate site. Glutamate 141 functions as the Nucleophile in the catalytic mechanism. Catalysis depends on glutamate 146, which acts as the Proton donor.

Belongs to the glycosyl hydrolase 16 family.

It localises to the periplasm. The catalysed reaction is Hydrolysis of beta-D-galactopyranose-(1-&gt;4)-alpha-L-galactopyranose-6-sulfate linkages in porphyran.. Functionally, cleaves the sulfated polysaccharide porphyran at the (1-&gt;4) linkages between beta-D-galactopyranose and alpha-L-galactopyranose-6-sulfate, forming mostly the disaccharide alpha-L-galactopyranose-6-sulfate-(1-&gt;3)-beta-D-galactose. This is Beta-porphyranase E (porE) from Zobellia galactanivorans (strain DSM 12802 / CCUG 47099 / CIP 106680 / NCIMB 13871 / Dsij).